The sequence spans 429 residues: MKKQRNLRSMAAQAVEQVVEQGQSLSNILPPLQQKVSDKDKALLQELCFGVLRTLSQLDWLINKSMARPMTGKQRTVHYLIMVGLYQLLYTRIPPHAALAETVEGAIAIKRPQLKGLINGVLRQFQRQQEELLAEFNTSDARYLHPSWLLKRLQKAYPEQWQSIVEANNQRPPMWLRINRTHHSRDTWLALLDEAGMKGFPHADYPDAVRLETPAPVHALPGFEDGWVTVQDASAQGCMTWLAPQNGEHILDLCAAPGGKTTHILEVAPEAQVVAVDIDEQRLSRVYDNLKRLGMKATVKQGDGRYPSQWCGEQQFDRILLDAPCSATGVIRRHPDIKWLRRDRDIPELAQLQSEILDAIWPHLKSGGTLVYATCSVLPEENSLQIKAFLQRTADAELCETGTPEQPGKQNLPGAEEGDGFFYAKLIKK.

S-adenosyl-L-methionine is bound by residues 254–260, Asp277, Asp303, and Asp322; that span reads CAAPGGK. Catalysis depends on Cys375, which acts as the Nucleophile.

This sequence belongs to the class I-like SAM-binding methyltransferase superfamily. RsmB/NOP family.

It localises to the cytoplasm. It carries out the reaction cytidine(967) in 16S rRNA + S-adenosyl-L-methionine = 5-methylcytidine(967) in 16S rRNA + S-adenosyl-L-homocysteine + H(+). Functionally, specifically methylates the cytosine at position 967 (m5C967) of 16S rRNA. This is Ribosomal RNA small subunit methyltransferase B from Escherichia coli O157:H7.